A 349-amino-acid polypeptide reads, in one-letter code: Protein FAM98C (349 aa).

The segment at 313–349 is disordered; that stretch reads PDRGGRPNELEPPMPTWRSRREDGGPQCWGRKKKKKK.

It belongs to the FAM98 family.

The sequence is that of Protein FAM98C (FAM98C) from Homo sapiens (Human).